We begin with the raw amino-acid sequence, 67 residues long: Inosine/xanthosine triphosphatase (67 aa).

This sequence belongs to the YjjX NTPase family. As to quaternary structure, homodimer. Requires Mg(2+) as cofactor. It depends on Mn(2+) as a cofactor.

It carries out the reaction XTP + H2O = XDP + phosphate + H(+). The catalysed reaction is ITP + H2O = IDP + phosphate + H(+). In terms of biological role, phosphatase that hydrolyzes non-canonical purine nucleotides such as XTP and ITP to their respective diphosphate derivatives. Probably excludes non-canonical purines from DNA/RNA precursor pool, thus preventing their incorporation into DNA/RNA and avoiding chromosomal lesions. The sequence is that of Inosine/xanthosine triphosphatase from Enterobacter cloacae.